The sequence spans 1434 residues: MKDLLKFLKAQSKTEEFDGIKIGLASPDMIRSWSFGEVKKPETINYRTFKPERDGLFCARIFGPVKDYECLCGKYKRLKHRGVICEKCGVEVTQTKVRRERMGHIELASPVAHIWFLKSLPSRIGLLLDMTLRDIERVLYFESFVVVDAGMTSLERSQMLTEEQYLDALEEYGDEFDAKMGAEAILALLRAQDLEHEIATMREELSQTNSETKRKKTTKRLKLMESFLQSGNKPEWMIMTVLPVLPPDLRPLVPLDGGRFATSDLNDLYRRVINRNNRLKRLLDLAAPDIIVRNEKRMLQEAVDALLDNGRRGRAITGSNKRPLKSLADMIKGKQGRFRQNLLGKRVDYSGRSVITVGPTLRLHQCGLPKKMALELFKPFIYGKLETRGLATTIKAAKKMVEREEAVVWDILDEVIREHPVMLNRAPTLHRLGIQAFEPILIEGKAIQLHPLVCSAFNADFDGDQMAVHLPLTLEAQLEARALMMSTNNILSPASGEPIIVPSQDVVLGLYYMTRSCVGAKGEGMVLSGAKEAEKIYRAGLASLHARVKCRITEYVKNEAGELVPKIELKNTTVGRAILSLILPKGMEYALIDPPLPMTEAGKAELAEHPERWIKYVSNQAMGKKQISKVLNTCYRKQGLKDTVIFADQLMYTGFHYAALSGSSVGIDDMVIPDAKKDIIAAAEAEVAEIQEQFQSGLVTAGERYNKVIDIWASANERVSKAMMENLSKETRQNSLGEDEVQASFNSVFMMADSGARGSAAQIRQLAGMRGLMAKPDGSIIETPIVANFREGLNVLQYFISTHGARKGLADTALKTANSGYLTRRLVDVAQDVVITELDCGTSEGLWMTPLIEGGDVVEPLRERVLGRVVAEDVLKPGTEDVLVARNTLLDEQWCNTLERNSVDRVKVRSAIACESDFGICAHCYGRDLARGHLVNNGEATGVIAAQSIGEPGTQLTMRTFHIGGAASRAAAESSASVKNTGVIKLQNAKSVENSAGKLVITSRSSELTIMDELGRTKESHKLPYGSVLEVKDGQAVKAGEIVANWDPHTHPIITEVAGRIQFENMIEGITITRQTDELTGLSSIVVLDVNERTTTGKELRPTVKLVDANGKDVLIPGTDVAAQYFLPGQAIVQLEDGAQVNVGDAVARIPQASSGTKDITGGLPRVADLFEARQPKEPAILAEISGTISFGKETKGKRRLVITPTDGGDAHEEMIPKWRNLNVFEGEKVQQGEVLADGPESAHDILRLRGISPVANYIVNEVQDVYRLQGVKINDKHIEVIVRQMLRKCEIVNPGDSDLLEGEQADVVRVKIANRKLVAEGKQPATFRRVLMGITKASLNTESFISAASFQETTRVLTEAAVSGKVDDLRGLKENVIVGRLIPAGTGFAYHHGRLEKRRQAAKAVVPVTQQATADEAEQNLADLLNAADNLNA.

Residues Cys70, Cys72, Cys85, and Cys88 each contribute to the Zn(2+) site. Residues Asp460, Asp462, and Asp464 each coordinate Mg(2+). The Zn(2+) site is built by Cys840, Cys914, Cys921, and Cys924.

The protein belongs to the RNA polymerase beta' chain family. As to quaternary structure, the RNAP catalytic core consists of 2 alpha, 1 beta, 1 beta' and 1 omega subunit. When a sigma factor is associated with the core the holoenzyme is formed, which can initiate transcription. Requires Mg(2+) as cofactor. Zn(2+) serves as cofactor.

The enzyme catalyses RNA(n) + a ribonucleoside 5'-triphosphate = RNA(n+1) + diphosphate. Its function is as follows. DNA-dependent RNA polymerase catalyzes the transcription of DNA into RNA using the four ribonucleoside triphosphates as substrates. In Tolumonas auensis (strain DSM 9187 / NBRC 110442 / TA 4), this protein is DNA-directed RNA polymerase subunit beta'.